We begin with the raw amino-acid sequence, 508 residues long: Photosystem II CP47 reaction center protein (508 aa).

A run of 6 helical transmembrane segments spans residues 21–36, 101–115, 140–156, 203–218, 237–252, and 457–472; these read AVHIMHTALVAGWAGS, IVFSGLCFLAAIWHW, GIHLFLAGVACFGFGAF, IAAGTLGILAGLFHLS, VLSSSIAAVFFAAFVV, and SFALLFFFGHIWHGAR.

Belongs to the PsbB/PsbC family. PsbB subfamily. PSII is composed of 1 copy each of membrane proteins PsbA, PsbB, PsbC, PsbD, PsbE, PsbF, PsbH, PsbI, PsbJ, PsbK, PsbL, PsbM, PsbT, PsbX, PsbY, PsbZ, Psb30/Ycf12, at least 3 peripheral proteins of the oxygen-evolving complex and a large number of cofactors. It forms dimeric complexes. It depends on Binds multiple chlorophylls. PSII binds additional chlorophylls, carotenoids and specific lipids. as a cofactor.

The protein localises to the plastid. It is found in the chloroplast thylakoid membrane. Functionally, one of the components of the core complex of photosystem II (PSII). It binds chlorophyll and helps catalyze the primary light-induced photochemical processes of PSII. PSII is a light-driven water:plastoquinone oxidoreductase, using light energy to abstract electrons from H(2)O, generating O(2) and a proton gradient subsequently used for ATP formation. This is Photosystem II CP47 reaction center protein from Trachelium caeruleum (Blue throatwort).